Consider the following 231-residue polypeptide: Biosynthetic peptidoglycan transglycosylase (231 aa).

Residues 10–30 form a helical membrane-spanning segment; that stretch reads LLLLGLIGLFLVWQLWLLGWV.

This sequence belongs to the glycosyltransferase 51 family.

Its subcellular location is the cell inner membrane. The catalysed reaction is [GlcNAc-(1-&gt;4)-Mur2Ac(oyl-L-Ala-gamma-D-Glu-L-Lys-D-Ala-D-Ala)](n)-di-trans,octa-cis-undecaprenyl diphosphate + beta-D-GlcNAc-(1-&gt;4)-Mur2Ac(oyl-L-Ala-gamma-D-Glu-L-Lys-D-Ala-D-Ala)-di-trans,octa-cis-undecaprenyl diphosphate = [GlcNAc-(1-&gt;4)-Mur2Ac(oyl-L-Ala-gamma-D-Glu-L-Lys-D-Ala-D-Ala)](n+1)-di-trans,octa-cis-undecaprenyl diphosphate + di-trans,octa-cis-undecaprenyl diphosphate + H(+). The protein operates within cell wall biogenesis; peptidoglycan biosynthesis. In terms of biological role, peptidoglycan polymerase that catalyzes glycan chain elongation from lipid-linked precursors. This is Biosynthetic peptidoglycan transglycosylase from Dechloromonas aromatica (strain RCB).